The chain runs to 500 residues: Organic cation/carnitine transporter 7 (500 aa).

Over 1–23 the chain is Cytoplasmic; that stretch reads MADGNTRFTVDEALVAMGFGKFQ. Residues 24–44 form a helical membrane-spanning segment; that stretch reads IYVLAYAGMGWVAEAMEMMLL. Topologically, residues 45 to 62 are extracellular; that stretch reads SFVGPAVQSLWNLSARQE. N-linked (GlcNAc...) asparagine glycosylation occurs at Asn-56. Residues 63–83 traverse the membrane as a helical segment; it reads SLITSVVFAGMLIGAYSWGIV. At 84 to 97 the chain is on the cytoplasmic side; that stretch reads SDKHGRRKGFIITA. The chain crosses the membrane as a helical span at residues 98-118; sequence VVTFVAGFLSAFSPNYMWLII. Residues 119–120 are Extracellular-facing; it reads LR. A helical transmembrane segment spans residues 121 to 141; the sequence is CLVGLGLGGGPVLASWYLEFI. 137-144 is an ATP binding site; the sequence is YLEFIPAP. Topologically, residues 142 to 150 are cytoplasmic; the sequence is PAPSRGTWM. Residues 151–171 form a helical membrane-spanning segment; sequence VVFSAFWTVGTIFEASLAWLV. The Extracellular portion of the chain corresponds to 172-174; that stretch reads MPR. Residues 175–195 form a helical membrane-spanning segment; sequence LGWRWLLAFSSVPSSLLLLFY. Residues 196–293 lie on the Cytoplasmic side of the membrane; the sequence is RWTSESPRYL…ALLSPTLMKR (98 aa). Residues 294-314 form a helical membrane-spanning segment; it reads TLLLWVVFFGNAFAYYGVVLL. At 315–341 the chain is on the extracellular side; that stretch reads TTELNNSHNRCYPTEKQLRNSNDVNYR. Asn-319 carries N-linked (GlcNAc...) asparagine glycosylation. A helical membrane pass occupies residues 342 to 362; the sequence is DVFIASFAEFPGLLISAAMVD. Over 363–367 the chain is Cytoplasmic; that stretch reads RLGRK. The chain crosses the membrane as a helical span at residues 368 to 387; it reads ASMASMLFTCCIFLLPLLSH. The Extracellular portion of the chain corresponds to 388–401; the sequence is QSPFITTVLLFGGR. The chain crosses the membrane as a helical span at residues 402-422; it reads ICISAAFTVVYIYAPEIYPTA. The Cytoplasmic segment spans residues 423–429; it reads VRTTGVG. The helical transmembrane segment at 430-450 threads the bilayer; sequence VGSSVGRIGGILCPLVAVGLV. The Extracellular segment spans residues 451–456; the sequence is HGCHQT. The helical transmembrane segment at 457 to 477 threads the bilayer; the sequence is IAVLLFEVVILVSGICVCLFP. Topologically, residues 478–500 are cytoplasmic; the sequence is FETSGRDLTDSISASKEPPSASV.

The protein belongs to the major facilitator (TC 2.A.1) superfamily. Organic cation transporter (TC 2.A.1.19) family. As to expression, expressed in pollen.

The protein localises to the membrane. In terms of biological role, high affinity carnitine transporter involved in the active cellular uptake of carnitine. Also transports organic cations. The protein is Organic cation/carnitine transporter 7 (OCT7) of Arabidopsis thaliana (Mouse-ear cress).